The sequence spans 140 residues: Organic hydroperoxide resistance protein-like (140 aa).

The protein belongs to the OsmC/Ohr family.

This is Organic hydroperoxide resistance protein-like from Mycoplasma pneumoniae (strain ATCC 29342 / M129 / Subtype 1) (Mycoplasmoides pneumoniae).